A 274-amino-acid polypeptide reads, in one-letter code: 2,3,4,5-tetrahydropyridine-2,6-dicarboxylate N-succinyltransferase (274 aa).

The substrate site is built by Arg103 and Asp140.

The protein belongs to the transferase hexapeptide repeat family. Homotrimer.

The protein localises to the cytoplasm. It catalyses the reaction (S)-2,3,4,5-tetrahydrodipicolinate + succinyl-CoA + H2O = (S)-2-succinylamino-6-oxoheptanedioate + CoA. It participates in amino-acid biosynthesis; L-lysine biosynthesis via DAP pathway; LL-2,6-diaminopimelate from (S)-tetrahydrodipicolinate (succinylase route): step 1/3. This chain is 2,3,4,5-tetrahydropyridine-2,6-dicarboxylate N-succinyltransferase, found in Haemophilus ducreyi (strain 35000HP / ATCC 700724).